Consider the following 567-residue polypeptide: MKPVWVATLLWMLLLVPRLGAARKGSPEEASFYYGTFPLGFSWGVGSSAYQTEGAWDQDGKGPSIWDVFTHSGKGKVLGNETADVACDGYYKVQEDIILLRELHVNHYRFSLSWPRLLPTGIRAEQVNKKGIEFYSDLIDALLSSNITPIVTLHHWDLPQLLQVKYGGWQNVSMANYFRDYANLCFEAFGDRVKHWITFSDPRAMAEKGYETGHHAPGLKLRGTGLYKAAHHIIKAHAKAWHSYNTTWRSKQQGLVGISLNCDWGEPVDISNPKDLEAAERYLQFCLGWFANPIYAGDYPQVMKDYIGRKSAEQGLEMSRLPVFSLQEKSYIKGTSDFLGLGHFTTRYITERNYPSRQGPSYQNDRDLIELVDPNWPDLGSKWLYSVPWGFRRLLNFAQTQYGDPPIYVMENGASQKFHCTQLCDEWRIQYLKGYINEMLKAIKDGANIKGYTSWSLLDKFEWEKGYSDRYGFYYVEFNDRNKPRYPKASVQYYKKIIIANGFPNPREVESWYLKALETCSINNQMLAAEPLLSHMQMVTEIVVPTVCSLCVLITAVLLMLLLRRQS.

An N-terminal signal peptide occupies residues 1–21 (MKPVWVATLLWMLLLVPRLGA). Over 23–541 (RKGSPEEASF…LLSHMQMVTE (519 aa)) the chain is Extracellular. N-linked (GlcNAc...) asparagine glycans are attached at residues Asn80, Asn171, and Asn245. The chain crosses the membrane as a helical span at residues 542–562 (IVVPTVCSLCVLITAVLLMLL). Residues 563–567 (LRRQS) are Cytoplasmic-facing.

Belongs to the glycosyl hydrolase 1 family. Klotho subfamily. May form dimers.

Its subcellular location is the endoplasmic reticulum membrane. Functionally, plays a role in formation of the lens suture in the eye, which is important for normal optical properties of the lens. The protein is Lactase-like protein (LCTL) of Homo sapiens (Human).